The chain runs to 510 residues: NAD(P)H-quinone oxidoreductase subunit 2 B, chloroplastic (510 aa).

A run of 13 helical transmembrane segments spans residues 24–44 (LLLFDGSFIFPECILIFGLIL), 57–77 (IPWLYFISSTSLVMSITALLF), 99–119 (IFQFLILLCSTLCIPLSVEYI), 124–144 (MAITEFLLFVLTATLGGMFLC), 149–169 (LITIFVAPECFSLCSYLLSGY), 183–203 (YLLMGGASSSILVHGFSWLYG), 227–247 (PGISIALIFITVGIGFKLSLA), 295–315 (WHLLLEILAILSMILGNLIAI), 323–343 (MLAYSSIGQIGYVIIGIIVGD), 354–374 (YMLFYISMNLGTFACIVLFGL), 395–415 (ALSLALCLLSLGGLPPLAGFF), 418–438 (LHLFWCGWQAGLYFLVSIGLL), and 484–504 (MIVCVIASTILGISMNPIIAI).

It belongs to the complex I subunit 2 family. NDH is composed of at least 16 different subunits, 5 of which are encoded in the nucleus.

It localises to the plastid. It is found in the chloroplast thylakoid membrane. The catalysed reaction is a plastoquinone + NADH + (n+1) H(+)(in) = a plastoquinol + NAD(+) + n H(+)(out). The enzyme catalyses a plastoquinone + NADPH + (n+1) H(+)(in) = a plastoquinol + NADP(+) + n H(+)(out). Functionally, NDH shuttles electrons from NAD(P)H:plastoquinone, via FMN and iron-sulfur (Fe-S) centers, to quinones in the photosynthetic chain and possibly in a chloroplast respiratory chain. The immediate electron acceptor for the enzyme in this species is believed to be plastoquinone. Couples the redox reaction to proton translocation, and thus conserves the redox energy in a proton gradient. The protein is NAD(P)H-quinone oxidoreductase subunit 2 B, chloroplastic of Citrus sinensis (Sweet orange).